The following is a 382-amino-acid chain: Mannitol-1-phosphate 5-dehydrogenase (382 aa).

3–14 contributes to the NAD(+) binding site; it reads ALHFGAGNIGRG. The residue at position 269 (lysine 269) is an N6-acetyllysine.

It belongs to the mannitol dehydrogenase family.

The enzyme catalyses D-mannitol 1-phosphate + NAD(+) = beta-D-fructose 6-phosphate + NADH + H(+). This is Mannitol-1-phosphate 5-dehydrogenase from Shigella sonnei (strain Ss046).